Here is a 467-residue protein sequence, read N- to C-terminus: Ribosome biogenesis protein YTM1 (467 aa).

The ubiquitin-like (UBL) domain stretch occupies residues 8 to 95; that stretch reads IKIKFFTNEE…ETFLSLEYTR (88 aa). Residues 105-467 form a sufficient for interaction with ERB1 and association with 66S pre-ribosomes region; sequence SFNNEDWISS…QINKGSDISK (363 aa). WD repeat units follow at residues 120–159, 161–199, 216–255, 293–333, 335–374, 382–422, and 432–467; these read KTLPSVTLSNMMISQPKILSGSYDGIVRTYNMSGNVEKQY, GHSGPIRAVKWVSPTRIVSAGNDRQVRLWKTSADDGSIP, GHKAPVVALAVENTSNRILSAGYDHSIGFWSTNYKEMTTI, SHTQ…CIDT, STGYSLLSIVQLPKSKLLATGSSARHINLHDPRISNNTTE, GHTN…SLYT, and KGADKVFAVSWDNEIGIISGGQDKKIQINKGSDISK.

It belongs to the WD repeat WDR12/YTM1 family. In terms of assembly, component of the NOP7 complex, composed of ERB1, NOP7 and YTM1. The complex is held together by ERB1, which interacts with NOP7 via its N-terminal domain and with YTM1 via a high-affinity interaction between the seven-bladed beta-propeller domains of the 2 proteins. The NOP7 complex associates with the 66S pre-ribosome. Interacts (via UBL domain) with MDN1 (via VWFA/MIDAS domain).

The protein localises to the nucleus. It localises to the nucleolus. It is found in the nucleoplasm. Its function is as follows. Component of the NOP7 complex, which is required for maturation of the 25S and 5.8S ribosomal RNAs and formation of the 60S ribosome. The chain is Ribosome biogenesis protein YTM1 from Scheffersomyces stipitis (strain ATCC 58785 / CBS 6054 / NBRC 10063 / NRRL Y-11545) (Yeast).